We begin with the raw amino-acid sequence, 137 residues long: Putative pre-16S rRNA nuclease (137 aa).

This sequence belongs to the YqgF nuclease family.

Its subcellular location is the cytoplasm. Its function is as follows. Could be a nuclease involved in processing of the 5'-end of pre-16S rRNA. The protein is Putative pre-16S rRNA nuclease of Anaeromyxobacter sp. (strain K).